The primary structure comprises 832 residues: MPLSYQHFRKLLLLDDEAGPLEEELPRLADEGLNRRVAEDLNLQLPNVSIPWTHKVGNFTGLYSSTLPVFNPNWQTPSFPDIHLHQDIINKCEQFVGPLTVNEKRRLKLSMPARFYPNSTKYLPLEKGIKPYYPDNVVNHYFQTRHYLHTLWQAGILYKRETTRSASFCGSPYSWEQELQHGAESFHQQSAGIFSRAPVGSSIQSKHQQSRLGLQPQKGLLARGNEGRSWSVRSRVHPTTWRSFGVEPSSSGHTNNFASKSASCLHQSAVRKAAYPTFSTTKRHSSSGHAVELHNISSSSAGSQSKGPVFSCWWLQFRNIEPCSEYCLSHLVSLLDDWGPCTEHGEHHIRIPRTPARVTGGVFLVDKNPHNTAESRLVVDFSQFSRGSTRVPWPKFAVPNLQSLTNLLSSNLSWLSLDVSAAFYHLPLHPAAMPHLLVGSSGLSRYVARLSSNSRILDHQHGTMQNLHDSCSRNLFDSLMLLYKTFGRKLHLYSHPIIMGFRKIPMGVGLSPFLLAQFTSAICSVVRRAFPHCLAFSYMDDVVLGAKSVQHLESLYTAVTNFLLSLGIHLNPNKTKRWGYSLHFMGYVIGSWGTLPQEHIVQKIKNCFRKLPVNRPIDWKVCQRIVGLLGFAAPFTQCGYPALMPLYACIQAKQAFTFSPTYKAFLSQQYSTLYPVARQRSGLCQVFADATPTGWGLVMGHQRMRGTFVAPLPIHTAELLAACFARSRSGAKLIGTDNSVVLSRKYTSFPWLLGCAANWILRGTSFVYVPSALNPADDPSRGRLGLYRPLIRLLFQPTTGRTSLYAVSPSVPSHLPVRVHFASPLHVAWRPP.

The terminal protein domain (TP) stretch occupies residues M1–Q177. The tract at residues E178–L335 is spacer. The segment at D336–Q679 is polymerase/reverse transcriptase domain (RT). The 244-residue stretch at E346 to I589 folds into the Reverse transcriptase domain. Positions 418, 540, and 541 each coordinate Mg(2+).

This sequence belongs to the hepadnaviridae P protein family.

The catalysed reaction is DNA(n) + a 2'-deoxyribonucleoside 5'-triphosphate = DNA(n+1) + diphosphate. It carries out the reaction Endonucleolytic cleavage to 5'-phosphomonoester.. Activated by host HSP70 and HSP40 in vitro to be able to bind the epsilon loop of the pgRNA. Because deletion of the RNase H region renders the protein partly chaperone-independent, the chaperones may be needed indirectly to relieve occlusion of the RNA-binding site by this domain. Inhibited by several reverse-transcriptase inhibitors: Lamivudine, Adefovir and Entecavir. Its function is as follows. Multifunctional enzyme that converts the viral RNA genome into dsDNA in viral cytoplasmic capsids. This enzyme displays a DNA polymerase activity that can copy either DNA or RNA templates, and a ribonuclease H (RNase H) activity that cleaves the RNA strand of RNA-DNA heteroduplexes in a partially processive 3'- to 5'-endonucleasic mode. Neo-synthesized pregenomic RNA (pgRNA) are encapsidated together with the P protein, and reverse-transcribed inside the nucleocapsid. Initiation of reverse-transcription occurs first by binding the epsilon loop on the pgRNA genome, and is initiated by protein priming, thereby the 5'-end of (-)DNA is covalently linked to P protein. Partial (+)DNA is synthesized from the (-)DNA template and generates the relaxed circular DNA (RC-DNA) genome. After budding and infection, the RC-DNA migrates in the nucleus, and is converted into a plasmid-like covalently closed circular DNA (cccDNA). The activity of P protein does not seem to be necessary for cccDNA generation, and is presumably released from (+)DNA by host nuclear DNA repair machinery. The polypeptide is Protein P (Pan troglodytes (Chimpanzee)).